Reading from the N-terminus, the 341-residue chain is Ribosomal RNA small subunit methyltransferase H (341 aa).

Residues 47–49 (GGY), D64, F91, D109, and Q116 each bind S-adenosyl-L-methionine.

This sequence belongs to the methyltransferase superfamily. RsmH family.

The protein localises to the cytoplasm. It catalyses the reaction cytidine(1402) in 16S rRNA + S-adenosyl-L-methionine = N(4)-methylcytidine(1402) in 16S rRNA + S-adenosyl-L-homocysteine + H(+). Specifically methylates the N4 position of cytidine in position 1402 (C1402) of 16S rRNA. This is Ribosomal RNA small subunit methyltransferase H from Agrobacterium fabrum (strain C58 / ATCC 33970) (Agrobacterium tumefaciens (strain C58)).